Consider the following 390-residue polypeptide: S-adenosylmethionine synthase (390 aa).

Position 15 (histidine 15) interacts with ATP. Aspartate 17 is a Mg(2+) binding site. Glutamate 43 is a K(+) binding site. The L-methionine site is built by glutamate 56 and glutamine 99. The interval 99–109 is flexible loop; the sequence is QSPDINQGVDR. Residues 164–166, 230–231, aspartate 239, 245–246, alanine 262, and lysine 266 each bind ATP; these read DAK, RF, and RK. L-methionine is bound at residue aspartate 239. Residue lysine 270 coordinates L-methionine.

Belongs to the AdoMet synthase family. As to quaternary structure, homotetramer; dimer of dimers. Requires Mg(2+) as cofactor. It depends on K(+) as a cofactor.

Its subcellular location is the cytoplasm. It carries out the reaction L-methionine + ATP + H2O = S-adenosyl-L-methionine + phosphate + diphosphate. The protein operates within amino-acid biosynthesis; S-adenosyl-L-methionine biosynthesis; S-adenosyl-L-methionine from L-methionine: step 1/1. Functionally, catalyzes the formation of S-adenosylmethionine (AdoMet) from methionine and ATP. The overall synthetic reaction is composed of two sequential steps, AdoMet formation and the subsequent tripolyphosphate hydrolysis which occurs prior to release of AdoMet from the enzyme. This is S-adenosylmethionine synthase from Photorhabdus laumondii subsp. laumondii (strain DSM 15139 / CIP 105565 / TT01) (Photorhabdus luminescens subsp. laumondii).